Reading from the N-terminus, the 272-residue chain is Alpha-tubulin N-acetyltransferase (272 aa).

The 186-residue stretch at 1–186 folds into the N-acetyltransferase domain; it reads MEFRFNCHPL…NNFVVYEGFF (186 aa). Residues 120–133 and 156–165 contribute to the acetyl-CoA site; these read FYVH…GLGR and SEKLLGFLQK. The tract at residues 216 to 244 is disordered; it reads TTVGEQRRSSSQTRQQVVSPPVVQQPPVG. Low complexity predominate over residues 224–244; it reads SSSQTRQQVVSPPVVQQPPVG.

Belongs to the acetyltransferase ATAT1 family.

The catalysed reaction is L-lysyl-[alpha-tubulin] + acetyl-CoA = N(6)-acetyl-L-lysyl-[alpha-tubulin] + CoA + H(+). In terms of biological role, specifically acetylates 'Lys-40' in alpha-tubulin on the lumenal side of microtubules. Promotes microtubule destabilization and accelerates microtubule dynamics; this activity may be independent of acetylation activity. Acetylates alpha-tubulin with a slow enzymatic rate, due to a catalytic site that is not optimized for acetyl transfer. Enters the microtubule through each end and diffuses quickly throughout the lumen of microtubules. Acetylates only long/old microtubules because of its slow acetylation rate since it does not have time to act on dynamically unstable microtubules before the enzyme is released. The protein is Alpha-tubulin N-acetyltransferase of Aedes aegypti (Yellowfever mosquito).